A 216-amino-acid chain; its full sequence is UPF0711 protein C18orf21 homolog (216 aa).

Disordered regions lie at residues 118–185 (RSFL…ASKT) and 197–216 (SQSE…LSSL). Over residues 124-136 (LKSNPTTPTSKLS) the composition is skewed to polar residues. Position 126 is a phosphoserine (Ser126). Residues Thr130 and Thr139 each carry the phosphothreonine modification. Polar residues-rich tracts occupy residues 145–157 (PSSA…SGSK) and 167–182 (TPTS…SKNA). Residues 200 to 209 (ESKKNPKMDF) show a composition bias toward basic and acidic residues.

This sequence belongs to the UPF0711 family.

The protein is UPF0711 protein C18orf21 homolog of Bos taurus (Bovine).